Consider the following 45-residue polypeptide: Conotoxin reg3.12 (45 aa).

A propeptide spanning residues 1 to 31 (DQPVERHAGNKRHLNPTIRRAMIIDANRREK) is cleaved from the precursor. 3 disulfides stabilise this stretch: cysteine 32-cysteine 44, cysteine 33-cysteine 42, and cysteine 38-cysteine 45.

It belongs to the conotoxin M superfamily. Expressed by the venom duct.

It localises to the secreted. This Conus regius (Crown cone) protein is Conotoxin reg3.12.